A 465-amino-acid chain; its full sequence is CCA-adding enzyme (465 aa).

ATP-binding residues include Ser63 and Lys66. CTP is bound by residues Ser63 and Lys66. Positions 75, 77, and 127 each coordinate Mg(2+). His149, Lys171, and Tyr180 together coordinate ATP. CTP-binding residues include His149, Lys171, and Tyr180.

The protein belongs to the tRNA nucleotidyltransferase/poly(A) polymerase family. Archaeal CCA-adding enzyme subfamily. As to quaternary structure, homodimer. Mg(2+) is required as a cofactor.

The enzyme catalyses a tRNA precursor + 2 CTP + ATP = a tRNA with a 3' CCA end + 3 diphosphate. It catalyses the reaction a tRNA with a 3' CCA end + 2 CTP + ATP = a tRNA with a 3' CCACCA end + 3 diphosphate. Its function is as follows. Catalyzes the addition and repair of the essential 3'-terminal CCA sequence in tRNAs without using a nucleic acid template. Adds these three nucleotides in the order of C, C, and A to the tRNA nucleotide-73, using CTP and ATP as substrates and producing inorganic pyrophosphate. tRNA 3'-terminal CCA addition is required both for tRNA processing and repair. Also involved in tRNA surveillance by mediating tandem CCA addition to generate a CCACCA at the 3' terminus of unstable tRNAs. While stable tRNAs receive only 3'-terminal CCA, unstable tRNAs are marked with CCACCA and rapidly degraded. The protein is CCA-adding enzyme of Aeropyrum pernix (strain ATCC 700893 / DSM 11879 / JCM 9820 / NBRC 100138 / K1).